The sequence spans 215 residues: Cytochrome b6 (215 aa).

A helical transmembrane segment spans residues 32-52 (IFYCLGGIVFVSFLIQVATGF). C35 contacts heme c. Heme b-binding residues include H86 and H100. 3 helical membrane passes run 90–110 (ASMM…TGGF), 116–136 (LTWV…VTGY), and 186–206 (LHTF…FLMI). Residues H187 and H202 each coordinate heme b.

This sequence belongs to the cytochrome b family. PetB subfamily. The 4 large subunits of the cytochrome b6-f complex are cytochrome b6, subunit IV (17 kDa polypeptide, PetD), cytochrome f and the Rieske protein, while the 4 small subunits are PetG, PetL, PetM and PetN. The complex functions as a dimer. It depends on heme b as a cofactor. Heme c is required as a cofactor.

The protein localises to the plastid. It is found in the chloroplast thylakoid membrane. Functionally, component of the cytochrome b6-f complex, which mediates electron transfer between photosystem II (PSII) and photosystem I (PSI), cyclic electron flow around PSI, and state transitions. The polypeptide is Cytochrome b6 (Porphyra purpurea (Red seaweed)).